The chain runs to 172 residues: ATP synthase subunit b (172 aa).

The helical transmembrane segment at 17–37 (IVFSAIVLAIVLPFFWWFVIP) threads the bilayer.

Belongs to the ATPase B chain family. In terms of assembly, F-type ATPases have 2 components, F(1) - the catalytic core - and F(0) - the membrane proton channel. F(1) has five subunits: alpha(3), beta(3), gamma(1), delta(1), epsilon(1). F(0) has three main subunits: a(1), b(2) and c(10-14). The alpha and beta chains form an alternating ring which encloses part of the gamma chain. F(1) is attached to F(0) by a central stalk formed by the gamma and epsilon chains, while a peripheral stalk is formed by the delta and b chains.

Its subcellular location is the cell membrane. Functionally, f(1)F(0) ATP synthase produces ATP from ADP in the presence of a proton or sodium gradient. F-type ATPases consist of two structural domains, F(1) containing the extramembraneous catalytic core and F(0) containing the membrane proton channel, linked together by a central stalk and a peripheral stalk. During catalysis, ATP synthesis in the catalytic domain of F(1) is coupled via a rotary mechanism of the central stalk subunits to proton translocation. Its function is as follows. Component of the F(0) channel, it forms part of the peripheral stalk, linking F(1) to F(0). The sequence is that of ATP synthase subunit b from Tropheryma whipplei (strain TW08/27) (Whipple's bacillus).